A 410-amino-acid polypeptide reads, in one-letter code: MKVYLVGGAVRDRLLGIPVQEQDWVVVGATPEELLKRKYRQVGRDFPVFLHPETKEEYALARTERKSAPGYYGFICDFSESVTLEEDLARRDLTINAMAMDEQGNLIDPYQGQRDLEEKLLRHVSSAFAEDPVRVLRVARFASRFHHLGFRIANETRLLMYSMVKQGELAHLIPERVWQEWQKSLEEKNPEQFILSLRSCDALRVILPEINSLFGVPNPHQYHQEIDTGIHSLMTLRASSELSEEPLVRFAALVHDLGKASTPIQAWPKHHGHEEEGTKLIRALCARLRIPNDYRDLAVTVARAHLNIHRVCELRPNTIVKLLEQVDAFRRPQLFHKILIACQADAESCGKTVVYRQTQLWNEILSECVKVTPQTFIVQGYEGKAIKEAMHQSRVACVERIMTSWKSNEK.

Gly-8 and Arg-11 together coordinate ATP. The CTP site is built by Gly-8 and Arg-11. Mg(2+) contacts are provided by Glu-21 and Asp-23. ATP is bound by residues Arg-91, Arg-137, and Arg-140. The CTP site is built by Arg-91, Arg-137, and Arg-140. The HD domain occupies 228–329 (TGIHSLMTLR…VKLLEQVDAF (102 aa)).

It belongs to the tRNA nucleotidyltransferase/poly(A) polymerase family. Bacterial CCA-adding enzyme type 1 subfamily. In terms of assembly, monomer. Can also form homodimers and oligomers. Mg(2+) serves as cofactor. Requires Ni(2+) as cofactor.

It catalyses the reaction a tRNA precursor + 2 CTP + ATP = a tRNA with a 3' CCA end + 3 diphosphate. The catalysed reaction is a tRNA with a 3' CCA end + 2 CTP + ATP = a tRNA with a 3' CCACCA end + 3 diphosphate. Catalyzes the addition and repair of the essential 3'-terminal CCA sequence in tRNAs without using a nucleic acid template. Adds these three nucleotides in the order of C, C, and A to the tRNA nucleotide-73, using CTP and ATP as substrates and producing inorganic pyrophosphate. tRNA 3'-terminal CCA addition is required both for tRNA processing and repair. Also involved in tRNA surveillance by mediating tandem CCA addition to generate a CCACCA at the 3' terminus of unstable tRNAs. While stable tRNAs receive only 3'-terminal CCA, unstable tRNAs are marked with CCACCA and rapidly degraded. This chain is Multifunctional CCA protein, found in Legionella pneumophila (strain Lens).